A 374-amino-acid chain; its full sequence is MAIRKKSSKNPPVLSHEFVLQNHADIVSCVAMVFLLGLMFEITAKVSIIFVTLQYNVTLPATEEQATESAFLYYYGIKDLATVFFYMLVAIIIHAIIQEYVLDKINRRMHFSKTKHSKFNESGQLSAFYLFSCIWGTFILISENYISDPTILWRAYPHNLMTFQMKFFYISQLAYWFHAFPELYFQKTKKEDIPRQLVYIGLYLFHIAGAYLLNLNHLGLVLLVLHYFVEFLFHISRLFYFSDEKYQKGFSLWAVLFVLGRLLTLILSVLTVGFGLARAENQKLDFSTGNFNVLAVRIAVLASICITQAFMMWKFINFQLRRWREHSAFQAPAVKKKPPVTKGRSSRKGTENGVNGTVTSNGADSPRNRKEKSS.

Over 1-29 (MAIRKKSSKNPPVLSHEFVLQNHADIVSC) the chain is Cytoplasmic. A helical membrane pass occupies residues 30 to 50 (VAMVFLLGLMFEITAKVSIIF). Residues 51 to 81 (VTLQYNVTLPATEEQATESAFLYYYGIKDLA) are Lumenal-facing. Asparagine 56 carries N-linked (GlcNAc...) asparagine glycosylation. The chain crosses the membrane as a helical span at residues 82-102 (TVFFYMLVAIIIHAIIQEYVL). Residues 103 to 121 (DKINRRMHFSKTKHSKFNE) lie on the Cytoplasmic side of the membrane. Positions 117 to 326 (SKFNESGQLS…NFQLRRWREH (210 aa)) constitute a TLC domain. A helical membrane pass occupies residues 122 to 142 (SGQLSAFYLFSCIWGTFILIS). Residues 143–159 (ENYISDPTILWRAYPHN) are Lumenal-facing. The chain crosses the membrane as a helical span at residues 160–180 (LMTFQMKFFYISQLAYWFHAF). The Cytoplasmic segment spans residues 181-192 (PELYFQKTKKED). A helical transmembrane segment spans residues 193–213 (IPRQLVYIGLYLFHIAGAYLL). Asparagine 214 is a topological domain (lumenal). The helical transmembrane segment at 215-235 (LNHLGLVLLVLHYFVEFLFHI) threads the bilayer. At 236–251 (SRLFYFSDEKYQKGFS) the chain is on the cytoplasmic side. Residues 252–272 (LWAVLFVLGRLLTLILSVLTV) traverse the membrane as a helical segment. Residues 273–297 (GFGLARAENQKLDFSTGNFNVLAVR) are Lumenal-facing. A helical transmembrane segment spans residues 298-318 (IAVLASICITQAFMMWKFINF). The Cytoplasmic segment spans residues 319 to 374 (QLRRWREHSAFQAPAVKKKPPVTKGRSSRKGTENGVNGTVTSNGADSPRNRKEKSS). Residues 331 to 374 (APAVKKKPPVTKGRSSRKGTENGVNGTVTSNGADSPRNRKEKSS) are disordered. A compositionally biased stretch (basic residues) spans 334–347 (VKKKPPVTKGRSSR). Residues 352 to 363 (NGVNGTVTSNGA) show a composition bias toward polar residues. Serine 365 is modified (phosphoserine).

Belongs to the TRAM family. Interacts with SEC61B. May interact with Derlin-1/DERL1. N-glycosylated.

The protein localises to the endoplasmic reticulum membrane. In terms of biological role, involved in the translocation of nascent protein chains into or through the endoplasmic reticulum (ER) membrane by facilitating the proper chain positioning at the SEC61 channel. Regulates the exposure of nascent secretory protein chain to the cytosol during translocation into the ER. May affect the phospholipid bilayer in the vicinity of the lateral gate of the SEC61 channel, thereby facilitating ER protein transport. Intimately associates with transmembrane (TM) domain of nascent membrane proteins during the entire integration process into the ER membrane. Associates with the second TM domain of G-protein-coupled receptor opsin/OPSD nascent chain in the ER membrane, which may facilitate its integration into the membrane. Under conditions of ER stress, participates in the disposal of misfolded ER membrane proteins during the unfolded protein response (UPR), an integrated stress response (ISR) pathway, by selectively retrotranslocating misfolded ER-membrane proteins from the ER into the cytosol where they are ubiquitinated and degraded by the proteasome. This Bos taurus (Bovine) protein is Translocating chain-associated membrane protein 1 (TRAM1).